Consider the following 378-residue polypeptide: Succinyl-diaminopimelate desuccinylase (378 aa).

Residue His68 participates in Zn(2+) binding. Asp70 is an active-site residue. Asp101 lines the Zn(2+) pocket. Glu135 serves as the catalytic Proton acceptor. Residues Glu136, Glu164, and His350 each contribute to the Zn(2+) site.

Belongs to the peptidase M20A family. DapE subfamily. In terms of assembly, homodimer. It depends on Zn(2+) as a cofactor. Requires Co(2+) as cofactor.

The enzyme catalyses N-succinyl-(2S,6S)-2,6-diaminopimelate + H2O = (2S,6S)-2,6-diaminopimelate + succinate. It participates in amino-acid biosynthesis; L-lysine biosynthesis via DAP pathway; LL-2,6-diaminopimelate from (S)-tetrahydrodipicolinate (succinylase route): step 3/3. In terms of biological role, catalyzes the hydrolysis of N-succinyl-L,L-diaminopimelic acid (SDAP), forming succinate and LL-2,6-diaminopimelate (DAP), an intermediate involved in the bacterial biosynthesis of lysine and meso-diaminopimelic acid, an essential component of bacterial cell walls. This Vibrio parahaemolyticus serotype O3:K6 (strain RIMD 2210633) protein is Succinyl-diaminopimelate desuccinylase.